The sequence spans 159 residues: Ribosomal RNA large subunit methyltransferase H (159 aa).

S-adenosyl-L-methionine contacts are provided by residues Leu-76, Gly-107, and 126-131 (LSKLTM).

This sequence belongs to the RNA methyltransferase RlmH family. As to quaternary structure, homodimer.

The protein resides in the cytoplasm. It catalyses the reaction pseudouridine(1915) in 23S rRNA + S-adenosyl-L-methionine = N(3)-methylpseudouridine(1915) in 23S rRNA + S-adenosyl-L-homocysteine + H(+). Specifically methylates the pseudouridine at position 1915 (m3Psi1915) in 23S rRNA. This chain is Ribosomal RNA large subunit methyltransferase H, found in Acinetobacter baumannii (strain SDF).